The primary structure comprises 365 residues: Glutamate 5-kinase 1 (365 aa).

Lys9 serves as a coordination point for ATP. The substrate site is built by Ser49, Asp136, and Asn148. Residues 168 to 169 and 210 to 216 each bind ATP; these read TD and TGGMKSK. Residues 276–353 form the PUA domain; sequence SGEIIIDAGA…DELDFEKTFE (78 aa).

The protein belongs to the glutamate 5-kinase family.

It localises to the cytoplasm. It catalyses the reaction L-glutamate + ATP = L-glutamyl 5-phosphate + ADP. Its pathway is amino-acid biosynthesis; L-proline biosynthesis; L-glutamate 5-semialdehyde from L-glutamate: step 1/2. Functionally, catalyzes the transfer of a phosphate group to glutamate to form L-glutamate 5-phosphate. This chain is Glutamate 5-kinase 1, found in Bacillus subtilis (strain 168).